The following is a 503-amino-acid chain: Arabinose import ATP-binding protein AraG (503 aa).

2 ABC transporter domains span residues Leu5–Arg240 and Leu253–Gly497. Gly37 to Ser44 serves as a coordination point for ATP.

This sequence belongs to the ABC transporter superfamily. Arabinose importer (TC 3.A.1.2.2) family. As to quaternary structure, the complex is composed of two ATP-binding proteins (AraG), two transmembrane proteins (AraH) and a solute-binding protein (AraF).

The protein resides in the cell inner membrane. It carries out the reaction L-arabinose(out) + ATP + H2O = L-arabinose(in) + ADP + phosphate + H(+). Functionally, part of the ABC transporter complex AraFGH involved in arabinose import. Responsible for energy coupling to the transport system. This is Arabinose import ATP-binding protein AraG from Burkholderia pseudomallei (strain K96243).